The chain runs to 108 residues: Urease subunit beta (108 aa).

It belongs to the urease beta subunit family. Heterotrimer of UreA (gamma), UreB (beta) and UreC (alpha) subunits. Three heterotrimers associate to form the active enzyme.

The protein localises to the cytoplasm. The catalysed reaction is urea + 2 H2O + H(+) = hydrogencarbonate + 2 NH4(+). It functions in the pathway nitrogen metabolism; urea degradation; CO(2) and NH(3) from urea (urease route): step 1/1. The polypeptide is Urease subunit beta (Trichormus variabilis (strain ATCC 29413 / PCC 7937) (Anabaena variabilis)).